The sequence spans 754 residues: Peptidyl-prolyl cis-trans isomerase G (754 aa).

The 166-residue stretch at 11–176 (FFDIAINNQP…AEVRILSCGE (166 aa)) folds into the PPIase cyclophilin-type domain. The span at 182–193 (KVKKEEKKRHKS) shows a compositional bias: basic residues. Residues 182-754 (KVKKEEKKRH…SPGTDEDKSG (573 aa)) form a disordered region. A compositionally biased stretch (low complexity) spans 194-216 (SSSSSSSSSDSDSSSDSQSSSDS). Positions 228–253 (KKRKKKHRKNSRKHKKEKKKRKKSKK) are enriched in basic residues. Serine 254, serine 256, serine 257, serine 259, and serine 290 each carry phosphoserine. The segment covering 292–310 (PKADEKERKNREREREREC) has biased composition (basic and acidic residues). Position 315 is a phosphoserine (serine 315). Residues 329 to 347 (SGRKIKGRGPRRYRTPSRS) are compositionally biased toward basic residues. Composition is skewed to basic and acidic residues over residues 348 to 368 (RSRD…EMQR) and 379 to 449 (RWIK…DKYK). Serine 356 is modified (phosphoserine). Phosphothreonine is present on threonine 358. Phosphoserine is present on serine 386. Lysine 392 participates in a covalent cross-link: Glycyl lysine isopeptide (Lys-Gly) (interchain with G-Cter in SUMO2). A phosphoserine mark is found at serine 397, serine 413, and serine 415. A compositionally biased stretch (basic residues) spans 450-462 (NKVKKRAKSKSRS). Composition is skewed to basic and acidic residues over residues 463–553 (KSKE…DITK) and 578–599 (RTHD…QEYR). The segment covering 616-627 (SRSKDRRRRRRD) has biased composition (basic residues). Basic and acidic residues predominate over residues 628–686 (SRSSEREESQSRNKDKYRNQESKSSHRKENSESEKRMYSKSRDHNSSNNSREKKADRDQ). Residues serine 687 and serine 690 each carry the phosphoserine modification. Positions 687–698 (SPFSKIKQSSQD) are enriched in polar residues. Lysine 693 is covalently cross-linked (Glycyl lysine isopeptide (Lys-Gly) (interchain with G-Cter in SUMO2)). Phosphoserine occurs at positions 696, 744, and 745. The span at 707 to 754 (KNKEDEKIRSSVEKENQKSKGQENDHVHEKNKKFDHESSPGTDEDKSG) shows a compositional bias: basic and acidic residues. Phosphothreonine is present on threonine 748. The residue at position 753 (serine 753) is a Phosphoserine.

In terms of assembly, interacts with CLK1, PNN and with the phosphorylated C-terminal domain of RNA polymerase II. As to expression, ubiquitous.

The protein resides in the nucleus matrix. The protein localises to the nucleus speckle. It catalyses the reaction [protein]-peptidylproline (omega=180) = [protein]-peptidylproline (omega=0). Its activity is regulated as follows. Inhibited by cyclosporin A (CsA). PPIase that catalyzes the cis-trans isomerization of proline imidic peptide bonds in oligopeptides and may therefore assist protein folding. May be implicated in the folding, transport, and assembly of proteins. May play an important role in the regulation of pre-mRNA splicing. This is Peptidyl-prolyl cis-trans isomerase G (PPIG) from Homo sapiens (Human).